Reading from the N-terminus, the 244-residue chain is Troponin I, cardiac muscle (244 aa).

A compositionally biased stretch (acidic residues) spans 1–25 (MSDEEEVTYEEEEEEYVEEEEEEVV). Residues 1-67 (MSDEEEVTYE…PQVKRKPKIS (67 aa)) are disordered. Serine 2 is modified (N-acetylserine). Position 2 is a phosphoserine; by CK2 (serine 2). Over residues 27–42 (PEPPKPAPPPAAPPPL) the composition is skewed to pro residues.

It belongs to the troponin I family. As to quaternary structure, binds to actin and tropomyosin. In terms of tissue distribution, heart.

Troponin I is the inhibitory subunit of troponin, the thin filament regulatory complex which confers calcium-sensitivity to striated muscle actomyosin ATPase activity. This is Troponin I, cardiac muscle (tnni3) from Xenopus laevis (African clawed frog).